The chain runs to 297 residues: uncharacterized protein (297 aa).

6 consecutive transmembrane segments (helical) span residues 26-48 (FVLH…IYAI), 80-102 (NIEL…AALF), 134-156 (LFKF…INLG), 185-205 (LGIF…AIVI), 225-247 (LVDT…VAAY), and 262-284 (LVAV…VELY).

The protein localises to the cell membrane. This is an uncharacterized protein from Archaeoglobus fulgidus (strain ATCC 49558 / DSM 4304 / JCM 9628 / NBRC 100126 / VC-16).